We begin with the raw amino-acid sequence, 288 residues long: ATP synthase gamma chain (288 aa).

It belongs to the ATPase gamma chain family. As to quaternary structure, F-type ATPases have 2 components, CF(1) - the catalytic core - and CF(0) - the membrane proton channel. CF(1) has five subunits: alpha(3), beta(3), gamma(1), delta(1), epsilon(1). CF(0) has three main subunits: a, b and c.

The protein localises to the cell inner membrane. Its function is as follows. Produces ATP from ADP in the presence of a proton gradient across the membrane. The gamma chain is believed to be important in regulating ATPase activity and the flow of protons through the CF(0) complex. This is ATP synthase gamma chain from Acidithiobacillus ferrooxidans (strain ATCC 23270 / DSM 14882 / CIP 104768 / NCIMB 8455) (Ferrobacillus ferrooxidans (strain ATCC 23270)).